A 237-amino-acid chain; its full sequence is CD63 antigen (237 aa).

The Cytoplasmic segment spans residues 1–11 (MAVEGGMKCVK). Residues 12–32 (FLLYVLLLVFCACAVGLIAVG) traverse the membrane as a helical segment. Residues 33–51 (VGTHLVLNQTITHGATPSF) are Extracellular-facing. N-linked (GlcNAc...) asparagine glycosylation occurs at Asn40. The helical transmembrane segment at 52-72 (LLPVVIIAVGAFLFLVAFVGC) threads the bilayer. The Cytoplasmic segment spans residues 73 to 81 (CGACKENYC). Residues 82–102 (LMITFAIFLSLIMLVEVAAAI) traverse the membrane as a helical segment. Residues 103–202 (AGYVFRDKVR…KIAAWLRKNV (100 aa)) are Extracellular-facing. N-linked (GlcNAc...) asparagine glycans are attached at residues Asn130, Asn150, and Asn171. The chain crosses the membrane as a helical span at residues 203–223 (LVVAAAALGIAFVEILGIVLA). Residues 224–237 (CCLVKSIRSGYEVM) are Cytoplasmic-facing. Positions 233-237 (GYEVM) match the Lysosomal targeting motif motif.

The protein belongs to the tetraspanin (TM4SF) family. In terms of assembly, interacts with TIMP1 and ITGB1 and recruits TIMP1 to ITGB1. Interacts with CD9. Identified in a complex with CD9 and ITGB3. Interacts with PMEL. Interacts with KDR/VEGFR2; identified in a complex with ITGB1 and KDR/VEGFR2 and is required to recruit KDR to ITGB1 complexes. Interacts with SYT7. In terms of processing, palmitoylated at a low, basal level in unstimulated platelets. The level of palmitoylation increases when platelets are activated by thrombin (in vitro).

The protein resides in the cell membrane. The protein localises to the lysosome membrane. It localises to the late endosome membrane. It is found in the endosome. Its subcellular location is the multivesicular body. The protein resides in the melanosome. The protein localises to the secreted. It localises to the extracellular exosome. It is found in the cell surface. Functions as a cell surface receptor for TIMP1 and plays a role in the activation of cellular signaling cascades. Plays a role in the activation of ITGB1 and integrin signaling, leading to the activation of AKT, FAK/PTK2 and MAP kinases. Promotes cell survival, reorganization of the actin cytoskeleton, cell adhesion, spreading and migration, via its role in the activation of AKT and FAK/PTK2. Plays a role in VEGFA signaling via its role in regulating the internalization of KDR/VEGFR2. Plays a role in intracellular vesicular transport processes, and is required for normal trafficking of the PMEL luminal domain that is essential for the development and maturation of melanocytes. Plays a role in the adhesion of leukocytes onto endothelial cells via its role in the regulation of SELP trafficking. May play a role in mast cell degranulation in response to Ms4a2/FceRI stimulation, but not in mast cell degranulation in response to other stimuli. This chain is CD63 antigen (CD63), found in Bos taurus (Bovine).